Consider the following 145-residue polypeptide: Large ribosomal subunit protein uL15 (145 aa).

The disordered stretch occupies residues 23 to 51 (IGSGWGKTGGRGHKGQKSRSGGKIRKSFE). Residues 32–47 (GRGHKGQKSRSGGKIR) show a composition bias toward basic residues.

It belongs to the universal ribosomal protein uL15 family. Part of the 50S ribosomal subunit.

In terms of biological role, binds to the 23S rRNA. This is Large ribosomal subunit protein uL15 from Buchnera aphidicola subsp. Cinara cedri (strain Cc).